We begin with the raw amino-acid sequence, 537 residues long: CTP synthase (537 aa).

Residues 1 to 267 (MTKYIFVTGG…DQIVLDHFDV (267 aa)) form an amidoligase domain region. S13 is a binding site for CTP. S13 provides a ligand contact to UTP. Residue 14-19 (SIGKGI) coordinates ATP. Y54 contributes to the L-glutamine binding site. D71 is a binding site for ATP. Mg(2+) contacts are provided by D71 and E141. Residues 148 to 150 (DIE), 188 to 193 (KTKPTQ), and K224 each bind CTP. UTP-binding positions include 188 to 193 (KTKPTQ) and K224. The 244-residue stretch at 292 to 535 (KIALVGKYVA…IDAANQTGKV (244 aa)) folds into the Glutamine amidotransferase type-1 domain. G354 is an L-glutamine binding site. The Nucleophile; for glutamine hydrolysis role is filled by C381. L-glutamine is bound by residues 382-385 (LGMQ), E405, and R463. Catalysis depends on residues H508 and E510.

The protein belongs to the CTP synthase family. Homotetramer.

The enzyme catalyses UTP + L-glutamine + ATP + H2O = CTP + L-glutamate + ADP + phosphate + 2 H(+). It carries out the reaction L-glutamine + H2O = L-glutamate + NH4(+). The catalysed reaction is UTP + NH4(+) + ATP = CTP + ADP + phosphate + 2 H(+). It participates in pyrimidine metabolism; CTP biosynthesis via de novo pathway; CTP from UDP: step 2/2. Its activity is regulated as follows. Allosterically activated by GTP, when glutamine is the substrate; GTP has no effect on the reaction when ammonia is the substrate. The allosteric effector GTP functions by stabilizing the protein conformation that binds the tetrahedral intermediate(s) formed during glutamine hydrolysis. Inhibited by the product CTP, via allosteric rather than competitive inhibition. In terms of biological role, catalyzes the ATP-dependent amination of UTP to CTP with either L-glutamine or ammonia as the source of nitrogen. Regulates intracellular CTP levels through interactions with the four ribonucleotide triphosphates. The sequence is that of CTP synthase from Lactiplantibacillus plantarum (strain ATCC BAA-793 / NCIMB 8826 / WCFS1) (Lactobacillus plantarum).